The sequence spans 485 residues: GTPase Obg (485 aa).

Positions 2–159 constitute an Obg domain; the sequence is SKFIDRVVLH…RDLVLELKSV (158 aa). The interval 64 to 84 is disordered; that stretch reads PHAKAGNGKPGEGGNRDGKMG. Positions 160–340 constitute an OBG-type G domain; it reads ADVGLVGFPS…LTFALADLVR (181 aa). Residues 166 to 173, 191 to 195, 212 to 215, 292 to 295, and 321 to 323 contribute to the GTP site; these read GFPSAGKS, FTTLV, DVPG, NKTD, and SAV. The Mg(2+) site is built by S173 and T193. The OCT domain maps to 358-438; it reads PIAVDESGFT…IGDVTFDWEP (81 aa). The segment covering 457-469 has biased composition (basic and acidic residues); sequence LEQSDRVSAAERK. The segment at 457–485 is disordered; sequence LEQSDRVSAAERKHASRVRRGLVEDDEQR.

This sequence belongs to the TRAFAC class OBG-HflX-like GTPase superfamily. OBG GTPase family. In terms of assembly, monomer. Mg(2+) is required as a cofactor.

Its subcellular location is the cytoplasm. An essential GTPase which binds GTP, GDP and possibly (p)ppGpp with moderate affinity, with high nucleotide exchange rates and a fairly low GTP hydrolysis rate. Plays a role in control of the cell cycle, stress response, ribosome biogenesis and in those bacteria that undergo differentiation, in morphogenesis control. This Nocardia farcinica (strain IFM 10152) protein is GTPase Obg.